The sequence spans 478 residues: UDP-N-acetylmuramate--L-alanine ligase (478 aa).

112 to 118 is an ATP binding site; sequence GTHGKTT.

This sequence belongs to the MurCDEF family.

Its subcellular location is the cytoplasm. The enzyme catalyses UDP-N-acetyl-alpha-D-muramate + L-alanine + ATP = UDP-N-acetyl-alpha-D-muramoyl-L-alanine + ADP + phosphate + H(+). Its pathway is cell wall biogenesis; peptidoglycan biosynthesis. In terms of biological role, cell wall formation. This chain is UDP-N-acetylmuramate--L-alanine ligase, found in Polaromonas naphthalenivorans (strain CJ2).